We begin with the raw amino-acid sequence, 226 residues long: Putative ABC transporter ATP-binding protein BQ02700 (226 aa).

Residues 4–225 (IKFDKVTQVF…VAIKEYIRRM (222 aa)) enclose the ABC transporter domain. 35–42 (GANGSGKS) serves as a coordination point for ATP.

This sequence belongs to the ABC transporter superfamily.

It localises to the cell inner membrane. Probably part of an ABC transporter complex. Responsible for energy coupling to the transport system. In Bartonella quintana (strain Toulouse) (Rochalimaea quintana), this protein is Putative ABC transporter ATP-binding protein BQ02700.